The sequence spans 307 residues: Vesicle-trafficking protein SEC22a (307 aa).

Position 2 is an N-acetylserine (S2). The Cytoplasmic segment spans residues 2–187; it reads SMILSASVIR…ISSAHQRLEP (186 aa). Phosphoserine occurs at positions 6 and 8. Residues 8–119 enclose the Longin domain; the sequence is SVIRVRDGLP…YCFIEFDNFI (112 aa). A helical transmembrane segment spans residues 188-208; the sequence is ATLSGIVGFILSLLCGALNLI. Residues 209 to 226 lie on the Lumenal side of the membrane; sequence RGFHAIESLLQSDGDDFN. A helical membrane pass occupies residues 227-247; the sequence is YIIAFFLGTAACLYQCYLLVY. Topologically, residues 248-253 are cytoplasmic; that stretch reads YTGWRN. Residues 254-271 form a helical membrane-spanning segment; it reads VKSFLTFGLICLCNMYLY. At 272-274 the chain is on the lumenal side; sequence ELR. Residues 275-295 traverse the membrane as a helical segment; the sequence is NLWQLFFHVTVGAFVTLQIWL. Residues 296–307 lie on the Cytoplasmic side of the membrane; that stretch reads RQAQGKAPDYDV.

Belongs to the synaptobrevin family.

The protein resides in the endoplasmic reticulum membrane. In terms of biological role, may be involved in vesicle transport between the ER and the Golgi complex. The polypeptide is Vesicle-trafficking protein SEC22a (SEC22A) (Macaca fascicularis (Crab-eating macaque)).